The primary structure comprises 547 residues: MAKEIFFSDEARNRLYEGVRKLNDAVKVTMGPRGRNVLVQKSFGAPAITKDGVSVAKEIELKDALENMGAGLVKEVASKTNDEAGDGTTTATVLAHSIFKEGLRNITAGANPVEVKRGMDKQAAAIIAELKNLSRKVTDKKEIAQVATISANSDSAIGGLIADAMEKVGKDGVITVEEAKSIQDELNVVEGMQFDRGYLSPYFITNAEKMQVELQSPYILLFDKKITNLKDLLPVLEQIQKTGKPLLIIAEDIEGEALATLVVNKLRGVLNISAVKAPGFGDRRKAMLEDIAILTGGEVVSEELGRTLESATLSDLGQASSVIIDKDNTTIVNGAGEKSAIDARIIQIKAQIAETTSDYDKEKLQERLAKLSGGVAVIKVGAATETEMKEKKDRVDDALSATKAAVEEGIVIGGGAAFIKAGAKVDLNLSGDEAIGADIVRRALTAPLRQIAENAGFDAGVVANSVSVSKDDNYGFNAATGEYVDMFKAGIIDPVKVERIALQNAVSVASLLLTTEATISELKEDKPMPAMPDMSGMGGMGGMGGMM.

ATP-binding positions include 29 to 32, lysine 50, 86 to 90, glycine 414, 477 to 479, and aspartate 493; these read TMGP, DGTTT, and NAA.

This sequence belongs to the chaperonin (HSP60) family. Forms a cylinder of 14 subunits composed of two heptameric rings stacked back-to-back. Interacts with the co-chaperonin GroES.

Its subcellular location is the cytoplasm. The enzyme catalyses ATP + H2O + a folded polypeptide = ADP + phosphate + an unfolded polypeptide.. Together with its co-chaperonin GroES, plays an essential role in assisting protein folding. The GroEL-GroES system forms a nano-cage that allows encapsulation of the non-native substrate proteins and provides a physical environment optimized to promote and accelerate protein folding. The chain is Chaperonin GroEL from Campylobacter rectus (Wolinella recta).